A 539-amino-acid chain; its full sequence is Glucose-6-phosphate isomerase (539 aa).

The active-site Proton donor is the Glu-353. Catalysis depends on residues His-384 and Lys-505.

It belongs to the GPI family.

It localises to the cytoplasm. The enzyme catalyses alpha-D-glucose 6-phosphate = beta-D-fructose 6-phosphate. Its pathway is carbohydrate biosynthesis; gluconeogenesis. The protein operates within carbohydrate degradation; glycolysis; D-glyceraldehyde 3-phosphate and glycerone phosphate from D-glucose: step 2/4. Functionally, catalyzes the reversible isomerization of glucose-6-phosphate to fructose-6-phosphate. This is Glucose-6-phosphate isomerase from Ralstonia nicotianae (strain ATCC BAA-1114 / GMI1000) (Ralstonia solanacearum).